Consider the following 394-residue polypeptide: NAD(P)H-quinone oxidoreductase subunit H (394 aa).

The protein belongs to the complex I 49 kDa subunit family. In terms of assembly, NDH-1 can be composed of about 15 different subunits; different subcomplexes with different compositions have been identified which probably have different functions.

The protein resides in the cellular thylakoid membrane. It carries out the reaction a plastoquinone + NADH + (n+1) H(+)(in) = a plastoquinol + NAD(+) + n H(+)(out). It catalyses the reaction a plastoquinone + NADPH + (n+1) H(+)(in) = a plastoquinol + NADP(+) + n H(+)(out). Functionally, NDH-1 shuttles electrons from an unknown electron donor, via FMN and iron-sulfur (Fe-S) centers, to quinones in the respiratory and/or the photosynthetic chain. The immediate electron acceptor for the enzyme in this species is believed to be plastoquinone. Couples the redox reaction to proton translocation, and thus conserves the redox energy in a proton gradient. Cyanobacterial NDH-1 also plays a role in inorganic carbon-concentration. In Synechococcus sp. (strain CC9902), this protein is NAD(P)H-quinone oxidoreductase subunit H.